The following is a 317-amino-acid chain: Retinol dehydrogenase 7 (317 aa).

33 to 57 is an NADP(+) binding site; the sequence is FITGCDSGFGNLLARQLDRRGMRVL. Ser-164 is a binding site for substrate. Catalysis depends on Tyr-176, which acts as the Proton acceptor.

It belongs to the short-chain dehydrogenases/reductases (SDR) family.

The protein resides in the microsome. It localises to the endoplasmic reticulum. The catalysed reaction is all-trans-retinol--[retinol-binding protein] + NAD(+) = all-trans-retinal--[retinol-binding protein] + NADH + H(+). It participates in cofactor metabolism; retinol metabolism. Its function is as follows. Acts on retinol bound on cellular retinol-binding protein (CRBP). The chain is Retinol dehydrogenase 7 from Rattus norvegicus (Rat).